A 668-amino-acid chain; its full sequence is MWHEARKHERKLRGMMVDYKKRAERRREYYEKIKKDPAQFLQVHGRACKVHLDSAVALAAESPVNMMPWQGDTNNMIDRFDVRAHLDHIPDYTPPLLTTISPEQESDERKCNYERYRGLVQNDFAGISEEQCLYQIYIDELYGGLQRPSEDEKKKLAEKKASIGYTYEDSTVAEVEKVAEKPEEEESPAEEESNSDEDEVIPDIDVEVDVDELNQEQVADLNKQATTYGMADGDFVRMLRKDKEEAEAIKHAKALEEEKAMYSGRRSRRQRREFREKRLRGRKISPPSYARRDSPTYDPYKRSPSESSSESRSRSRSPSPGREEKITFITSFGGSDEEAAAAAAAAAASGAAPGKPPAPPQTGGPAPGRNASTRRRSSSSSASRTSSSRSSSRSSSRSRRGYYRSGRHARSRSRSWSRSRSRSRRYSRSRSRGRRHSDGGSRDGHRYSRSPARRGGYVPRRRSRSRSRSGDRYKRGARGPRHHSSSHSRSSWSLSPSRSRSVTRSGSRSQSRSRSRSQSHSQSQSHSPSPPREKLTRPAASPAVGEKLKKTEPAAGKETGAAKPKLTPQERLKLRMQKALNRQFKADKKAAQEKMIQQEHERQEREDELRAMARKIRMKERERREKEREEWERQYSRQSRSPSPRYSREYSSSRRRSRSRSRSPHYRH.

S101 carries the phosphoserine modification. Disordered stretches follow at residues 173–232 (AEVE…GMAD) and 252–668 (AKAL…HYRH). A compositionally biased stretch (acidic residues) spans 182–214 (PEEEESPAEEESNSDEDEVIPDIDVEVDVDELN). Over residues 265–283 (RRSRRQRREFREKRLRGRK) the composition is skewed to basic residues. 2 positions are modified to phosphoserine: S285 and S294. Residues 290–313 (ARRDSPTYDPYKRSPSESSSESRS) are compositionally biased toward basic and acidic residues. T327 is subject to Phosphothreonine. S331 and S335 each carry phosphoserine. Low complexity-rich tracts occupy residues 340–353 (AAAA…GAAP) and 378–395 (SSSS…SRSS). Residues 396–435 (SRSRRGYYRSGRHARSRSRSWSRSRSRSRRYSRSRSRGRR) are compositionally biased toward basic residues. Basic and acidic residues predominate over residues 436–446 (HSDGGSRDGHR). The segment covering 475–486 (RGARGPRHHSSS) has biased composition (basic residues). Composition is skewed to low complexity over residues 487 to 510 (HSRS…SRSQ) and 518 to 527 (QSHSQSQSHS). A Phosphoserine modification is found at S541. At T567 the chain carries Phosphothreonine. Positions 579–641 (ALNRQFKADK…ERQYSRQSRS (63 aa)) form a coiled coil. 2 stretches are compositionally biased toward basic and acidic residues: residues 584–611 (FKAD…ELRA) and 619–635 (KERE…ERQY). The span at 636–645 (SRQSRSPSPR) shows a compositional bias: low complexity. Residues 653–668 (SRRRSRSRSRSPHYRH) are compositionally biased toward basic residues.

The protein belongs to the splicing factor SR family. In terms of assembly, probably interacts with CLK4. Post-translationally, phosphorylated in vitro by CLK4. As to expression, highly expressed in brain. Expressed at intermediate level in lung and liver. In brain, it is expressed in the hippocampus, cerebellum and olfactory bulb.

The protein localises to the nucleus. It localises to the nucleoplasm. Functionally, probably functions as an alternative splicing regulator. May regulate the mRNA splicing of genes such as CLK1. May act by regulating members of the CLK kinase family. In Mus musculus (Mouse), this protein is CLK4-associating serine/arginine rich protein (Clasrp).